The primary structure comprises 156 residues: Transcription elongation factor GreA (156 aa).

Residues 1–84 (MAKYTISKHR…IEDVLRSTDE (84 aa)) are a coiled coil.

Belongs to the GreA/GreB family.

Functionally, necessary for efficient RNA polymerase transcription elongation past template-encoded arresting sites. The arresting sites in DNA have the property of trapping a certain fraction of elongating RNA polymerases that pass through, resulting in locked ternary complexes. Cleavage of the nascent transcript by cleavage factors such as GreA or GreB allows the resumption of elongation from the new 3'terminus. GreA releases sequences of 2 to 3 nucleotides. The protein is Transcription elongation factor GreA of Ureaplasma parvum serovar 3 (strain ATCC 27815 / 27 / NCTC 11736).